Consider the following 204-residue polypeptide: Regulatory protein RecX (204 aa).

The span at 1 to 22 (MTKSSRPQSISDSVSVAGSQGT) shows a compositional bias: polar residues. A disordered region spans residues 1 to 44 (MTKSSRPQSISDSVSVAGSQGTLDDLRARVASVPEAPTREPVDS).

Belongs to the RecX family.

Its subcellular location is the cytoplasm. Its function is as follows. Modulates RecA activity. This Mycobacteroides abscessus (strain ATCC 19977 / DSM 44196 / CCUG 20993 / CIP 104536 / JCM 13569 / NCTC 13031 / TMC 1543 / L948) (Mycobacterium abscessus) protein is Regulatory protein RecX.